The following is an 822-amino-acid chain: Fibroblast growth factor receptor 1 (822 aa).

Positions 1–21 are cleaved as a signal peptide; it reads MWGWRGLLFWAVLVTATLCTA. The Extracellular portion of the chain corresponds to 22–376; sequence RPAPTLPEQA…AVMTSPLYLE (355 aa). The Ig-like C2-type 1 domain occupies 25–119; that stretch reads PTLPEQAQPW…DTTYFSVNVS (95 aa). Residues Cys55 and Cys101 are joined by a disulfide bond. Asn77 and Asn117 each carry an N-linked (GlcNAc...) asparagine glycan. The interval 120-162 is disordered; it reads DALPSSEDDDDDDDSSSEEKETDNTKPNRRPVAPYWTSPEKME. Residues 125 to 135 show a composition bias toward acidic residues; the sequence is SEDDDDDDDSS. A compositionally biased stretch (basic and acidic residues) spans 136 to 145; it reads SEEKETDNTK. 2 consecutive Ig-like C2-type domains span residues 158–246 and 255–357; these read PEKM…YQLD and PILQ…AWLT. Residues 160-177 are heparin-binding; that stretch reads KMEKKLHAVPAAKTVKFK. Cys178 and Cys230 are oxidised to a cystine. N-linked (GlcNAc...) asparagine glycans are attached at residues Asn227, Asn240, Asn264, Asn296, Asn317, and Asn330. A disulfide bridge links Cys277 with Cys341. The chain crosses the membrane as a helical span at residues 377 to 397; it reads IIIYCTGAFLISCMVGSVIIY. The Cytoplasmic portion of the chain corresponds to 398–822; that stretch reads KMKSGTKKSD…QLANGGLNRR (425 aa). Tyr463 bears the Phosphotyrosine; by autocatalysis mark. The Protein kinase domain maps to 478–767; the sequence is LVLGKPLGEG…VALTSNQEYL (290 aa). ATP-binding positions include 484–490, Lys514, 562–564, and Asn568; these read LGEGCFG and EYA. 2 positions are modified to phosphotyrosine; by autocatalysis: Tyr583 and Tyr585. Residue Asp623 is the Proton acceptor of the active site. 2 residues coordinate ATP: Arg627 and Asp641. Phosphotyrosine; by autocatalysis is present on residues Tyr653, Tyr654, Tyr730, and Tyr766. Residues 770–822 are disordered; it reads SMPLDQDSPSFPDTRSSTCSSGEDSVFSHEPFPEEPCLPRHPTQLANGGLNRR. A compositionally biased stretch (polar residues) spans 776-792; it reads DSPSFPDTRSSTCSSGE.

The protein belongs to the protein kinase superfamily. Tyr protein kinase family. Fibroblast growth factor receptor subfamily. Monomer. Homodimer after ligand binding. Interacts predominantly with FGF1 and FGF2, but can also interact with FGF3, FGF4, FGF5, FGF6, FGF8, FGF10, FGF19, FGF21, FGF22 and FGF23 (in vitro). Ligand specificity is determined by tissue-specific expression of isoforms, and differences in the third Ig-like domain are crucial for ligand specificity. Affinity for fibroblast growth factors (FGFs) is increased by heparan sulfate glycosaminoglycans that function as coreceptors. Likewise, KLB increases the affinity for FGF19, FGF21 and FGF23. Interacts (phosphorylated on Tyr-766) with PLCG1 (via SH2 domains). Interacts with FRS2. Interacts (via C-terminus) with NEDD4 (via WW3 domain). Interacts with RPS6KA1. Interacts with KL. Interacts with SHB (via SH2 domain) and GRB10. Interacts with ANOS1; this interaction does not interfere with FGF2-binding to FGFR1, but prevents binding of heparin-bound FGF2. Interacts with SOX2 and SOX3. Interacts with FLRT1, FLRT2 and FLRT3. Found in a ternary complex with FGF1 and ITGAV:ITGB3. Autophosphorylated. Binding of FGF family members together with heparan sulfate proteoglycan or heparin promotes receptor dimerization and autophosphorylation on tyrosine residues. Autophosphorylation occurs in trans between the two FGFR molecules present in the dimer and proceeds in a highly ordered manner. Initial autophosphorylation at Tyr-653 increases the kinase activity by a factor of 50 to 100. After this, Tyr-583 becomes phosphorylated, followed by phosphorylation of Tyr-463, Tyr-766, Tyr-583 and Tyr-585. In a third stage, Tyr-654 is autophosphorylated, resulting in a further tenfold increase of kinase activity. Phosphotyrosine residues provide docking sites for interacting proteins and so are crucial for FGFR1 function and its regulation. Post-translationally, ubiquitinated. FGFR1 is rapidly ubiquitinated by NEDD4 after autophosphorylation, leading to internalization and lysosomal degradation. CBL is recruited to activated FGFR1 via FRS2 and GRB2, and mediates ubiquitination and subsequent degradation of FGFR1. In terms of processing, N-glycosylated in the endoplasmic reticulum. The N-glycan chains undergo further maturation to an Endo H-resistant form in the Golgi apparatus. As to expression, expressed in the parathyroid.

The protein localises to the cell membrane. It localises to the nucleus. It is found in the cytoplasm. The protein resides in the cytosol. Its subcellular location is the cytoplasmic vesicle. It catalyses the reaction L-tyrosyl-[protein] + ATP = O-phospho-L-tyrosyl-[protein] + ADP + H(+). With respect to regulation, present in an inactive conformation in the absence of bound ligand. Ligand binding leads to dimerization and activation by sequential autophosphorylation on tyrosine residues. Tyrosine-protein kinase that acts as a cell-surface receptor for fibroblast growth factors and plays an essential role in the regulation of embryonic development, cell proliferation, differentiation and migration. Required for normal mesoderm patterning and correct axial organization during embryonic development, normal skeletogenesis and normal development of the gonadotropin-releasing hormone (GnRH) neuronal system. Phosphorylates PLCG1, FRS2, GAB1 and SHB. Ligand binding leads to the activation of several signaling cascades. Activation of PLCG1 leads to the production of the cellular signaling molecules diacylglycerol and inositol 1,4,5-trisphosphate. Phosphorylation of FRS2 triggers recruitment of GRB2, GAB1, PIK3R1 and SOS1, and mediates activation of RAS, MAPK1/ERK2, MAPK3/ERK1 and the MAP kinase signaling pathway, as well as of the AKT1 signaling pathway. Promotes phosphorylation of SHC1, STAT1 and PTPN11/SHP2. In the nucleus, enhances RPS6KA1 and CREB1 activity and contributes to the regulation of transcription. FGFR1 signaling is down-regulated by IL17RD/SEF, and by FGFR1 ubiquitination, internalization and degradation. The protein is Fibroblast growth factor receptor 1 (Fgfr1) of Rattus norvegicus (Rat).